Here is a 525-residue protein sequence, read N- to C-terminus: tRNA-2-methylthio-N(6)-dimethylallyladenosine synthase (525 aa).

The MTTase N-terminal domain occupies 14–130 (RTYQVRTYGC…LPTLLERARH (117 aa)). [4Fe-4S] cluster contacts are provided by Cys23, Cys59, Cys93, Cys167, Cys171, and Cys174. The 248-residue stretch at 153–400 (RESAYAGWVS…IELQERISLE (248 aa)) folds into the Radical SAM core domain. The TRAM domain occupies 403–482 (QAQVGRTLEL…PHHLIADGAL (80 aa)).

It belongs to the methylthiotransferase family. MiaB subfamily. As to quaternary structure, monomer. [4Fe-4S] cluster is required as a cofactor.

Its subcellular location is the cytoplasm. It catalyses the reaction N(6)-dimethylallyladenosine(37) in tRNA + (sulfur carrier)-SH + AH2 + 2 S-adenosyl-L-methionine = 2-methylsulfanyl-N(6)-dimethylallyladenosine(37) in tRNA + (sulfur carrier)-H + 5'-deoxyadenosine + L-methionine + A + S-adenosyl-L-homocysteine + 2 H(+). Functionally, catalyzes the methylthiolation of N6-(dimethylallyl)adenosine (i(6)A), leading to the formation of 2-methylthio-N6-(dimethylallyl)adenosine (ms(2)i(6)A) at position 37 in tRNAs that read codons beginning with uridine. This is tRNA-2-methylthio-N(6)-dimethylallyladenosine synthase from Mycobacterium sp. (strain MCS).